Reading from the N-terminus, the 388-residue chain is MRYLTAGESHGPRLTAIIEGIPAGLPLTAEDINGDLKRRQGGYGRGGRMKIESDQVVFTSGVRHGKTTGAPITMDVVNKDHQKWLDIMSAEDIEDRLKSKRKITHPRPGHADLVGGIKYRFDDLRNSLERSSARETTMRVAVGAVAKRLLAELDMEIANHVVVFGGKEIDVPENLTVAEIKQRAAQSEVSIVNQEREQEIKDYIDQIKRDGDTIGGVVETVVGGVPVGLGSYVQWDRKLDARLAQAVVSINAFKGVEFGLGFEAGYRKGSQVMDEILWSKEDGYTRRTNNLGGFEGGMTNGQPIVVRGVMKPIPTLYKPLMSVDIETHEPYKATVERSDPTALPAAGMVMEAVVATVLAQEILEKFSSDNLEELKEAVAKYRDYTKNY.

Residues Arg39 and Arg45 each coordinate NADP(+). FMN is bound by residues 130–132, 251–252, Gly296, 311–315, and Arg337; these read RSS, NA, and KPIPT.

The protein belongs to the chorismate synthase family. As to quaternary structure, homotetramer. FMNH2 is required as a cofactor.

It catalyses the reaction 5-O-(1-carboxyvinyl)-3-phosphoshikimate = chorismate + phosphate. Its pathway is metabolic intermediate biosynthesis; chorismate biosynthesis; chorismate from D-erythrose 4-phosphate and phosphoenolpyruvate: step 7/7. Catalyzes the anti-1,4-elimination of the C-3 phosphate and the C-6 proR hydrogen from 5-enolpyruvylshikimate-3-phosphate (EPSP) to yield chorismate, which is the branch point compound that serves as the starting substrate for the three terminal pathways of aromatic amino acid biosynthesis. This reaction introduces a second double bond into the aromatic ring system. This chain is Chorismate synthase, found in Streptococcus pneumoniae (strain ATCC 700669 / Spain 23F-1).